Here is a 301-residue protein sequence, read N- to C-terminus: uncharacterized protein (301 aa).

Active-site charge relay system residues include Ser-44 and Tyr-107. The active-site Proton donor is the Tyr-133. The Schiff-base intermediate with substrate role is filled by Lys-162.

The protein belongs to the DapA family. In terms of assembly, homotetramer.

Its subcellular location is the cytoplasm. This is an uncharacterized protein from Pyrobaculum neutrophilum (strain DSM 2338 / JCM 9278 / NBRC 100436 / V24Sta) (Thermoproteus neutrophilus).